A 702-amino-acid chain; its full sequence is Elongation factor G (702 aa).

The 283-residue stretch at 8–290 folds into the tr-type G domain; the sequence is TRYRNIGISA…AVIEYLPAPT (283 aa). GTP-binding positions include 17 to 24, 88 to 92, and 142 to 145; these read AHIDAGKT, DTPGH, and NKMD.

This sequence belongs to the TRAFAC class translation factor GTPase superfamily. Classic translation factor GTPase family. EF-G/EF-2 subfamily.

Its subcellular location is the cytoplasm. In terms of biological role, catalyzes the GTP-dependent ribosomal translocation step during translation elongation. During this step, the ribosome changes from the pre-translocational (PRE) to the post-translocational (POST) state as the newly formed A-site-bound peptidyl-tRNA and P-site-bound deacylated tRNA move to the P and E sites, respectively. Catalyzes the coordinated movement of the two tRNA molecules, the mRNA and conformational changes in the ribosome. The sequence is that of Elongation factor G from Erwinia tasmaniensis (strain DSM 17950 / CFBP 7177 / CIP 109463 / NCPPB 4357 / Et1/99).